The primary structure comprises 141 residues: Hemoglobin subunit alpha (141 aa).

A Globin domain is found at Val-1–Arg-141. Ser-3 carries the phosphoserine modification. Lys-7 and Lys-11 each carry N6-succinyllysine. Lys-16 carries the N6-acetyllysine; alternate modification. At Lys-16 the chain carries N6-succinyllysine; alternate. The residue at position 24 (Tyr-24) is a Phosphotyrosine. Residue Lys-40 is modified to N6-succinyllysine. Ser-49 bears the Phosphoserine mark. His-58 lines the O2 pocket. Residue His-87 participates in heme b binding. Phosphoserine is present on Ser-102. The residue at position 108 (Thr-108) is a Phosphothreonine. The residue at position 124 (Ser-124) is a Phosphoserine. A phosphothreonine mark is found at Thr-134 and Thr-137. At Ser-138 the chain carries Phosphoserine.

This sequence belongs to the globin family. Heterotetramer of two alpha chains and two beta chains. As to expression, red blood cells.

In terms of biological role, involved in oxygen transport from the lung to the various peripheral tissues. Functionally, hemopressin acts as an antagonist peptide of the cannabinoid receptor CNR1. Hemopressin-binding efficiently blocks cannabinoid receptor CNR1 and subsequent signaling. The sequence is that of Hemoglobin subunit alpha (HBA) from Lama vicugna (Vicugna).